Consider the following 416-residue polypeptide: MASNGSFSAQRNANARTTMKRRSDNRGYGGGIGGYQEETNRYAPPQKRFRSQAQQQFRSGHNPLYHHHGSNNNNVSRVSSQSYNNCGVDVIASNSSFALRNNDSNTNNYQKPFVAGYGNPNPQIVPLPLPYRKLDDNLSLDSLPDWVPNSRTLTPNYPVRSSNFVPNTPVFTNVQNPMNHSNMVSVVSQSMHQPIVLSKELTDLLSLLNNEKEKKTLEASNSDSLPVGLSFDNPSSLNVRHESVIKSLYSDMPRQCSSCGLRFKCQEEHSKHMDWHVRKNRSVKTTTRLGQQPKKSRGWLASASLWLCAATGGETVEVASFGGEMQKKKGKDEEPKQLMVPADEDQKNCALCVEPFEEFFSHEDDDWMYKDAVYLTKNGRIVHVKCMPEPRPAKDLREPSRVMSVTVPSVAKAIAC.

Positions Met1–Thr17 are enriched in polar residues. The tract at residues Met1–Ser80 is disordered. A compositionally biased stretch (low complexity) spans Ser70 to Ser80. Positions Lys199–Ser220 form a coiled coil. The C2H2-type zinc-finger motif lies at Arg254–His276.

Forms a complex with cleavage and polyadenylation specificity factor (CPSF) subunits CLPS3, CLPS5, CPSF30, PCFS4, PCFS5, CSTF77 and FIPS3.

The protein localises to the nucleus. This chain is Polyadenylation and cleavage factor homolog 1, found in Arabidopsis thaliana (Mouse-ear cress).